A 203-amino-acid chain; its full sequence is Cytochrome c biogenesis ATP-binding export protein CcmA (203 aa).

The ABC transporter domain maps to 2–203 (LEALDLAGVR…KTSQTVRMGA (202 aa)). 34–41 (GENGSGKT) is an ATP binding site.

The protein belongs to the ABC transporter superfamily. CcmA exporter (TC 3.A.1.107) family. As to quaternary structure, the complex is composed of two ATP-binding proteins (CcmA) and two transmembrane proteins (CcmB).

It is found in the cell inner membrane. It carries out the reaction heme b(in) + ATP + H2O = heme b(out) + ADP + phosphate + H(+). Part of the ABC transporter complex CcmAB involved in the biogenesis of c-type cytochromes; once thought to export heme, this seems not to be the case, but its exact role is uncertain. Responsible for energy coupling to the transport system. This is Cytochrome c biogenesis ATP-binding export protein CcmA from Pseudomonas aeruginosa.